The following is a 162-amino-acid chain: Cyclic pyranopterin monophosphate synthase (162 aa).

Substrate contacts are provided by residues 75 to 77 and 115 to 116; these read MCH and ME. Asp-130 is an active-site residue.

The protein belongs to the MoaC family. As to quaternary structure, homohexamer; trimer of dimers.

It carries out the reaction (8S)-3',8-cyclo-7,8-dihydroguanosine 5'-triphosphate = cyclic pyranopterin phosphate + diphosphate. Its pathway is cofactor biosynthesis; molybdopterin biosynthesis. Its function is as follows. Catalyzes the conversion of (8S)-3',8-cyclo-7,8-dihydroguanosine 5'-triphosphate to cyclic pyranopterin monophosphate (cPMP). The sequence is that of Cyclic pyranopterin monophosphate synthase from Geobacillus thermodenitrificans (strain NG80-2).